A 308-amino-acid chain; its full sequence is Aspartate carbamoyltransferase catalytic subunit (308 aa).

R50 and T51 together coordinate carbamoyl phosphate. An L-aspartate-binding site is contributed by K78. Carbamoyl phosphate is bound by residues R100, H131, and Q134. L-aspartate contacts are provided by R164 and R216. A259 and P260 together coordinate carbamoyl phosphate.

This sequence belongs to the aspartate/ornithine carbamoyltransferase superfamily. ATCase family. As to quaternary structure, heterododecamer (2C3:3R2) of six catalytic PyrB chains organized as two trimers (C3), and six regulatory PyrI chains organized as three dimers (R2).

It catalyses the reaction carbamoyl phosphate + L-aspartate = N-carbamoyl-L-aspartate + phosphate + H(+). It participates in pyrimidine metabolism; UMP biosynthesis via de novo pathway; (S)-dihydroorotate from bicarbonate: step 2/3. In terms of biological role, catalyzes the condensation of carbamoyl phosphate and aspartate to form carbamoyl aspartate and inorganic phosphate, the committed step in the de novo pyrimidine nucleotide biosynthesis pathway. The protein is Aspartate carbamoyltransferase catalytic subunit of Oenococcus oeni (strain ATCC BAA-331 / PSU-1).